The following is a 357-amino-acid chain: IGF-like family receptor 1 (357 aa).

Residues methionine 1–alanine 22 form the signal peptide. The Extracellular portion of the chain corresponds to serine 23–serine 160. Positions isoleucine 100–tryptophan 147 are disordered. The segment covering serine 129–serine 139 has biased composition (low complexity). The helical transmembrane segment at leucine 161–alanine 181 threads the bilayer. Topologically, residues leucine 182–alanine 357 are cytoplasmic.

The protein localises to the cell membrane. Functionally, probable cell membrane receptor for the IGF-like family protein IGFL. The polypeptide is IGF-like family receptor 1 (IGFLR1) (Bos taurus (Bovine)).